A 729-amino-acid chain; its full sequence is Rho GTPase-activating protein 28 (729 aa).

Disordered regions lie at residues 20–42 (AQPPNAESRCAPRAAASHPLSRK) and 55–105 (SNES…AEVT). The span at 65–75 (SRSNSEASVDS) shows a compositional bias: polar residues. Residue serine 72 is modified to Phosphoserine. The segment covering 80–89 (DFWREIESIK) has biased composition (basic and acidic residues). Position 159 is a phosphothreonine (threonine 159). Positions 176–236 (GVSESPPRDT…SQDKEGSFAV (61 aa)) are disordered. A compositionally biased stretch (basic and acidic residues) spans 195 to 204 (GTKEERELPR). Residues 217–226 (SLNSTTLSDA) show a composition bias toward polar residues. A Rho-GAP domain is found at 380–577 (VPLTVLLDGD…LMLKYQKILW (198 aa)). The tract at residues 612 to 631 (TLERETASPKTSKVLQKSPS) is disordered. Over residues 619–630 (SPKTSKVLQKSP) the composition is skewed to polar residues.

In terms of tissue distribution, expressed in testis. Expressed at moderate level in kidney and ovary, and weakly expressed in spleen and skeletal muscle.

Functionally, GTPase activator for the Rho-type GTPases by converting them to an inactive GDP-bound state. The sequence is that of Rho GTPase-activating protein 28 (ARHGAP28) from Homo sapiens (Human).